The primary structure comprises 373 residues: Peptide chain release factor 2 (373 aa).

An N5-methylglutamine modification is found at Q251.

It belongs to the prokaryotic/mitochondrial release factor family. In terms of processing, methylated by PrmC. Methylation increases the termination efficiency of RF2.

The protein localises to the cytoplasm. Functionally, peptide chain release factor 2 directs the termination of translation in response to the peptide chain termination codons UGA and UAA. The sequence is that of Peptide chain release factor 2 from Salinispora arenicola (strain CNS-205).